The primary structure comprises 387 residues: MEGVLSQLAVLVLEDGTKFHGRAIGAKGITVGEVVFNTSITGYQEIITDPSYSHQIVTLTHPHIGNVGTNSNDEESSKIYIKGLIIRDLSLTASNYRNKKSFSSYLKENNIIAISDIDTRKLTRILRTKGSQNGCIIEDKKQNYSIAYNKAKNFISLQDLDLAKKVSTKSIYNWDQGSFTFKKNNFFSINKQKFLFHVVVYDFGVKRNILRMLVDRGCYLTVVPAITDPKTVLNLSPDGIFLSNGPGDPRPCDYAIHAIQYFLKTNIPIFGICLGHQLLALASGAKIVKMKFGHHGGNHPVKDIKNNRVIITSQNHSFTVDTENLPNNIEITHSSLFDGTLQGLSLTNKSAFSFQGHPEASPGPHDASYLFDYFIKLIVSQKTTLSN.

A CPSase region spans residues 1 to 196 (MEGVLSQLAV…FSINKQKFLF (196 aa)). L-glutamine contacts are provided by serine 51, glycine 245, and glycine 247. A Glutamine amidotransferase type-1 domain is found at 197–384 (HVVVYDFGVK…IKLIVSQKTT (188 aa)). The active-site Nucleophile is cysteine 273. Residues leucine 274, glutamine 277, asparagine 315, and phenylalanine 318 each coordinate L-glutamine. Active-site residues include histidine 357 and glutamate 359.

Belongs to the CarA family. Composed of two chains; the small (or glutamine) chain promotes the hydrolysis of glutamine to ammonia, which is used by the large (or ammonia) chain to synthesize carbamoyl phosphate. Tetramer of heterodimers (alpha,beta)4.

The catalysed reaction is hydrogencarbonate + L-glutamine + 2 ATP + H2O = carbamoyl phosphate + L-glutamate + 2 ADP + phosphate + 2 H(+). It catalyses the reaction L-glutamine + H2O = L-glutamate + NH4(+). The protein operates within amino-acid biosynthesis; L-arginine biosynthesis; carbamoyl phosphate from bicarbonate: step 1/1. Its pathway is pyrimidine metabolism; UMP biosynthesis via de novo pathway; (S)-dihydroorotate from bicarbonate: step 1/3. In terms of biological role, small subunit of the glutamine-dependent carbamoyl phosphate synthetase (CPSase). CPSase catalyzes the formation of carbamoyl phosphate from the ammonia moiety of glutamine, carbonate, and phosphate donated by ATP, constituting the first step of 2 biosynthetic pathways, one leading to arginine and/or urea and the other to pyrimidine nucleotides. The small subunit (glutamine amidotransferase) binds and cleaves glutamine to supply the large subunit with the substrate ammonia. This is Carbamoyl phosphate synthase small chain from Buchnera aphidicola subsp. Acyrthosiphon pisum (strain APS) (Acyrthosiphon pisum symbiotic bacterium).